We begin with the raw amino-acid sequence, 966 residues long: Mitogen-activated protein kinase kinase kinase 13 (966 aa).

2 disordered regions span residues 1-22 (MANFQEHLSCSSSPHLPFSESK) and 93-112 (SEMAVSQGNSNTVDAESTSG). Over residues 96–112 (AVSQGNSNTVDAESTSG) the composition is skewed to polar residues. A Protein kinase domain is found at 168-409 (ISELQWLGSG…FRQTLMHLDI (242 aa)). Residues 174-182 (LGSGAQGAV) and K195 contribute to the ATP site. The active-site Proton acceptor is the D279. 2 leucine-zipper regions span residues 433-454 (VKKHFEKIKSEGTCIHRLDEEL) and 486-507 (LSAIMLQLEMREKELVKREQAV). Disordered regions lie at residues 534–652 (KRKG…SQSH), 744–834 (DIPS…RRQR), 846–873 (STFSSENFSVSDGEEGNTSDHSNSPDEL), and 887–906 (DLLSQTPEIPIDISSHSDGL). The segment covering 567-581 (SPLSGSPKMSTSSSK) has biased composition (low complexity). The segment covering 582–594 (SRYRSKPRHRRGN) has biased composition (basic residues). 2 stretches are compositionally biased toward polar residues: residues 609–629 (QPAQENSPNPTYLHQAQSQYP) and 781–795 (FSSCRSESSLGTSHL). The segment covering 814–827 (DSSEEEEGEVDSEV) has biased composition (acidic residues). Positions 815-828 (SSEEEEGEVDSEVE) are acidic. The span at 846-855 (STFSSENFSV) shows a compositional bias: polar residues.

It belongs to the protein kinase superfamily. STE Ser/Thr protein kinase family. MAP kinase kinase kinase subfamily. Homodimer; forms dimers through the leucine-zipper motif. Interacts with the C-terminus of MAPK8IP1 through the kinase catalytic domain. Binds PRDX3. Associates with the IKK complex through the kinase domain. Mg(2+) serves as cofactor. Post-translationally, autophosphorylated on serine and threonine residues.

The protein resides in the cytoplasm. It localises to the membrane. The catalysed reaction is L-seryl-[protein] + ATP = O-phospho-L-seryl-[protein] + ADP + H(+). It carries out the reaction L-threonyl-[protein] + ATP = O-phospho-L-threonyl-[protein] + ADP + H(+). Its activity is regulated as follows. Activated by autophosphorylation and homodimerization. Functionally, activates the JUN N-terminal pathway through activation of the MAP kinase kinase MAP2K7. Acts synergistically with PRDX3 to regulate the activation of NF-kappa-B in the cytosol. This activation is kinase-dependent and involves activating the IKK complex, the IKBKB-containing complex that phosphorylates inhibitors of NF-kappa-B. In Pongo abelii (Sumatran orangutan), this protein is Mitogen-activated protein kinase kinase kinase 13.